Here is a 358-residue protein sequence, read N- to C-terminus: Nicotinate-nucleotide--dimethylbenzimidazole phosphoribosyltransferase (358 aa).

Glu-313 (proton acceptor) is an active-site residue.

Belongs to the CobT family.

The enzyme catalyses 5,6-dimethylbenzimidazole + nicotinate beta-D-ribonucleotide = alpha-ribazole 5'-phosphate + nicotinate + H(+). Its pathway is nucleoside biosynthesis; alpha-ribazole biosynthesis; alpha-ribazole from 5,6-dimethylbenzimidazole: step 1/2. Its function is as follows. Catalyzes the synthesis of alpha-ribazole-5'-phosphate from nicotinate mononucleotide (NAMN) and 5,6-dimethylbenzimidazole (DMB). This chain is Nicotinate-nucleotide--dimethylbenzimidazole phosphoribosyltransferase, found in Corynebacterium glutamicum (strain ATCC 13032 / DSM 20300 / JCM 1318 / BCRC 11384 / CCUG 27702 / LMG 3730 / NBRC 12168 / NCIMB 10025 / NRRL B-2784 / 534).